The following is a 1789-amino-acid chain: MMVFQSFILGNLVSLCMKIINSVVVVGLYYGFLTTFSIGPSYLFLLRARVMDEGEEGTEKKVSATTGFIAGQLMMFISIYYAPLHLALGRPHTITVLALPYLLFHFFWNNHKHFFDYGSTTRNEMRNLRIQCVFLNNLIFQLFNHFILPSSMLARLVNIYMFRCNNKMLFVTSSFVGWLIGHILFMKWVGLVLVWIQQNNSIRSNVLIRSNKYKFLVSELRNSMARIFSILLFITCVYYLGRIPSPIFTKKLKGTSETGGTKQDQEVSTAEAPFPSLFSEEGEDLDKIDEMEEIRVNEKDKINKDDEFHVRTYYKTVSENLDGNKENSNLEFFKIKKKEDHFLWFEKPFVTLVFDYKRWNRPNRYIKNDKIENTVRNEMAQYFFYTCQSDGKERIAFTYPPNLSTFFEMIQKRIPSFTREKITSDQVSTYWSLIHEEKKENLKKEFLNRIEALDKGGSVENILEKTTRFCYNEAKKEYLPKIYDPFLHGISRGRIKKLPPFKIITETYRKNNIRGSWINKIHGLLLKLNYHKFEQTIENFNRKSLSIEKKLSFFSEPQQEEKFNSEEEIKIFKFLFDIVRTDSNDQTLIKNFIDFHEINKKVPRWSYKLISELEELEGENEENVPMEPGIRSRKAKRVVVFTDKEPHDEIYTNLKENQNSDQKDEMALIRYSQQSDFRREIIKGSMRSQRRKPVIWEFFQAKVHSPLFFDRIDKLFFFSFDIWGLKKKILKNFISQTKKKNFDKKEEEQSKIEEKRRIEIAETWDSFLFAQIIRGSLLVTQSILRKYIILPLLILIKNSVRMLLFQFPEWSEDLKDWKREMHVKCTYNGVQLSETEFPRNWLTDGIQIKILFPFYLKPWHKSKFQASQKARLKKTKDKGEKNDFCFLTVWGMETELPFGSAQRKPSFFEPISKELKKRIKKLKTKSLVVLRIFKERATIFLKVANEIKNWILKNFIFIKGKIKDLSKRNPISLFGPREIYELNETKKDSIIRNQIIHELSVQNKSMEWTNSSLSENKITNLIDRIKTIRNQIEEISKEKQNLTNNCTKLRYDSKKIESSKKIWQAFKRKNTRLIRKSIFFFKFCIEQLSIAIFLGIINIPKITTQLFFESIKTILDKSIYKNEEKGEKKKNPFYFISTIKNLISNKKKMSYDLCSLSQAYVFYKLSQIKVSNVSKLKDVLEYNICITSFFVKNKIKSFFQEQGIFHYELKNKTFLNSEVNQWKNWLRSHYQYNLPQIAWARLVTQNWKKKINKDSLVLNPSLTKEDSYEKKKFDNYKKQNFFEADSVLNPKHNFKKDYIYNLFCYKSIHPTENFFDMYVGIALDNCLVSSCLEKYNIRGMREIWHRKYVDWRILNFWFTKKVNIEPWVNTKSKKKYINTKVQNYQRIDKITKTDLANQKSFFFDWMGMNEEILNHRITNFEFFFFPEFFLFSSTYKIKPWVIPIKLLLLNFNENINVNKKLTRKKKGFIPSNEKKSLRFYNLNKEEKESAGQFELESDKEKKRNPESALLNQEKNIEENFAESMIKKRQNKKQYKSNTEAELDLFLTRYSRFQLRWNCFFNQKILNNVKVYCLLVRLNNPNEIAISSIERGEMSLDILMIEKNFTFAKLMKKGILIIEPVRLSVQNDGQLIIYRTIGIPLVHKNKHKISKRSKKKSYIDKKIFEKSKTKYQNKTVNRKKKHYDFFVPENILSPKRRREFRILICFNLKKKTARDRNSRFDKNIQNLTTVLHKKKDLNKEKNNLINLKSFLWPKFRLEDLACMNRYWFNTTNGTNFSMIRIRMYTRFPIH.

6 consecutive transmembrane segments (helical) span residues 19–39, 68–88, 91–111, 133–153, 176–196, and 227–247; these read IINS…FSIG, FIAG…HLAL, PHTI…WNNH, VFLN…SSML, VGWL…LVWI, and IFSI…PSPI.

This sequence belongs to the TIC214 family. Part of the Tic complex.

It is found in the plastid. The protein localises to the chloroplast inner membrane. Functionally, involved in protein precursor import into chloroplasts. May be part of an intermediate translocation complex acting as a protein-conducting channel at the inner envelope. The protein is Protein TIC 214 of Capsella bursa-pastoris (Shepherd's purse).